Consider the following 625-residue polypeptide: tRNA uridine 5-carboxymethylaminomethyl modification enzyme MnmG (625 aa).

FAD contacts are provided by residues 16–21 (GGGHAG), Ile128, and Ser183. 275-289 (GPRYCPSIEDKVVRF) contacts NAD(+). Gln372 is an FAD binding site.

The protein belongs to the MnmG family. Homodimer. Heterotetramer of two MnmE and two MnmG subunits. FAD is required as a cofactor.

It localises to the cytoplasm. Functionally, NAD-binding protein involved in the addition of a carboxymethylaminomethyl (cmnm) group at the wobble position (U34) of certain tRNAs, forming tRNA-cmnm(5)s(2)U34. In Protochlamydia amoebophila (strain UWE25), this protein is tRNA uridine 5-carboxymethylaminomethyl modification enzyme MnmG.